The primary structure comprises 118 residues: Large ribosomal subunit protein uL22c (118 aa).

The protein belongs to the universal ribosomal protein uL22 family. As to quaternary structure, part of the 50S ribosomal subunit.

Its subcellular location is the plastid. The protein resides in the chloroplast. Its function is as follows. This protein binds specifically to 23S rRNA. In terms of biological role, the globular domain of the protein is located near the polypeptide exit tunnel on the outside of the subunit, while an extended beta-hairpin is found that lines the wall of the exit tunnel in the center of the 70S ribosome. The sequence is that of Large ribosomal subunit protein uL22c (rpl22) from Physcomitrium patens (Spreading-leaved earth moss).